Here is a 773-residue protein sequence, read N- to C-terminus: FT-interacting protein 3 (773 aa).

Basic and acidic residues predominate over residues 1–16; sequence MQRPPPEDFSLKETRP. The tract at residues 1-24 is disordered; it reads MQRPPPEDFSLKETRPHLGGGKLS. 3 C2 domains span residues 22–142, 181–305, and 345–471; these read KLSG…PQWY, VSGT…SRWY, and YSSD…THSY. Ca(2+)-binding residues include D55, D61, D108, D110, and D115. The next 3 membrane-spanning stretches (helical) occupy residues 574 to 594, 608 to 628, and 716 to 736; these read IMGV…ICNW, IILV…LFLI, and LFVL…FQVV.

This sequence belongs to the MCTP family. In terms of assembly, interacts with and regulates subcellular localization and trafficking of STM. Requires Ca(2+) as cofactor. In terms of tissue distribution, accumulates in vascular tissues, leaf primordia and flowers. Highly expressed in roots meristems and in both vegetative and inflorescence shoot apical meristems (SAMs).

It is found in the endoplasmic reticulum membrane. Its subcellular location is the cytoplasm. The protein localises to the vesicle. The protein resides in the cell membrane. It localises to the endosome membrane. It is found in the golgi apparatus membrane. Its function is as follows. Required for proliferation and differentiation of shoot stem cells in the shoot apical meristem (SAM), thus determining the appropriate balance between the maintenance of shoot stem cells and their differentiation into other aboveground plant parts via the control of subcellular localization and intercellular trafficking of STM in the shoot apex. Prevents intracellular trafficking of STM to the plasma membrane in cells in the peripheral shoot meristem region thus facilitating STM recycling to the nucleus to maintain stem cells. May function as a signaling molecule by regulating the trafficking of other regulators. The polypeptide is FT-interacting protein 3 (Arabidopsis thaliana (Mouse-ear cress)).